The chain runs to 342 residues: Holliday junction branch migration complex subunit RuvB (342 aa).

The interval 1 to 179 (MTNILSPEKS…FGIPMRLNFY (179 aa)) is large ATPase domain (RuvB-L). Residues Ile-18, Arg-19, Gly-60, Lys-63, Thr-64, Thr-65, 126 to 128 (EDF), Arg-169, Tyr-179, and Arg-216 each bind ATP. Thr-64 is a Mg(2+) binding site. The small ATPAse domain (RuvB-S) stretch occupies residues 180-250 (NTEELKQVLN…ICDFGLKRLT (71 aa)). Residues 253–342 (SIGLDSNDYR…NQLNILNENE (90 aa)) are head domain (RuvB-H). Positions 289, 308, and 313 each coordinate DNA.

It belongs to the RuvB family. Homohexamer. Forms an RuvA(8)-RuvB(12)-Holliday junction (HJ) complex. HJ DNA is sandwiched between 2 RuvA tetramers; dsDNA enters through RuvA and exits via RuvB. An RuvB hexamer assembles on each DNA strand where it exits the tetramer. Each RuvB hexamer is contacted by two RuvA subunits (via domain III) on 2 adjacent RuvB subunits; this complex drives branch migration. In the full resolvosome a probable DNA-RuvA(4)-RuvB(12)-RuvC(2) complex forms which resolves the HJ.

It is found in the cytoplasm. The catalysed reaction is ATP + H2O = ADP + phosphate + H(+). Its function is as follows. Participates in UV-tolerance of Synechocystis PCC 6803. The RuvA-RuvB-RuvC complex processes Holliday junction (HJ) DNA during genetic recombination and DNA repair, while the RuvA-RuvB complex plays an important role in the rescue of blocked DNA replication forks via replication fork reversal (RFR). RuvA specifically binds to HJ cruciform DNA, conferring on it an open structure. The RuvB hexamer acts as an ATP-dependent pump, pulling dsDNA into and through the RuvAB complex. RuvB forms 2 homohexamers on either side of HJ DNA bound by 1 or 2 RuvA tetramers; 4 subunits per hexamer contact DNA at a time. Coordinated motions by a converter formed by DNA-disengaged RuvB subunits stimulates ATP hydrolysis and nucleotide exchange. Immobilization of the converter enables RuvB to convert the ATP-contained energy into a lever motion, pulling 2 nucleotides of DNA out of the RuvA tetramer per ATP hydrolyzed, thus driving DNA branch migration. The RuvB motors rotate together with the DNA substrate, which together with the progressing nucleotide cycle form the mechanistic basis for DNA recombination by continuous HJ branch migration. Branch migration allows RuvC to scan DNA until it finds its consensus sequence, where it cleaves and resolves cruciform DNA. In Rickettsia prowazekii (strain Madrid E), this protein is Holliday junction branch migration complex subunit RuvB.